The primary structure comprises 342 residues: Putative gluconeogenesis factor (342 aa).

The disordered stretch occupies residues 318-342; the sequence is SEPPVAATQEIPIDGGRPRGDDAWR. At threonine 325 the chain carries Phosphothreonine. Basic and acidic residues predominate over residues 333–342; the sequence is GRPRGDDAWR.

The protein belongs to the gluconeogenesis factor family. In terms of processing, phosphorylated by PknA and/or PknB.

Its subcellular location is the cytoplasm. Functionally, required for morphogenesis under gluconeogenic growth conditions. The protein is Putative gluconeogenesis factor of Mycobacterium tuberculosis (strain CDC 1551 / Oshkosh).